The following is a 677-amino-acid chain: Heat shock transcription factor (677 aa).

2 disordered regions span residues 1–56 and 115–164; these read MGHN…DDSN and STSS…SQQP. 2 stretches are compositionally biased toward polar residues: residues 115 to 131 and 143 to 164; these read STSS…TNAT and QPSS…SQQP. Residues 193–297 mediate DNA binding; that stretch reads ARPAFVNKLW…EYLLENIVRQ (105 aa). The involved in trimerization stretch occupies residues 320-373; that stretch reads ELETVKYNQLAIAEDLKRITKDNEMLWKENMMARERHQSQQQVLEKLLRFLSSV. 2 stretches are compositionally biased toward low complexity: residues 400–416 and 457–501; these read NHMS…INPN and RSMS…QGQQ. Disordered stretches follow at residues 400–444, 457–541, and 606–677; these read NHMS…VPLQ, RSMS…NQYS, and KLNP…RRAA. Residues 466–677 form an activatory region; that stretch reads NLNQRQSPQN…NNGQKRRRAA (212 aa). 2 stretches are compositionally biased toward polar residues: residues 502–541 and 629–641; these read FSYP…NQYS and FANT…SEQP. Residues 650–669 show a composition bias toward basic and acidic residues; that stretch reads EELRNSRLHEPDRSFEEKNN.

It belongs to the HSF family. In terms of assembly, homotrimer. Homotrimerization increases the affinity of HSF1 to DNA. Post-translationally, exhibits temperature-dependent phosphorylation.

It is found in the nucleus. Its function is as follows. DNA-binding transcription factor that specifically binds heat shock promoter elements (HSE) and activates transcription. This Kluyveromyces lactis (strain ATCC 8585 / CBS 2359 / DSM 70799 / NBRC 1267 / NRRL Y-1140 / WM37) (Yeast) protein is Heat shock transcription factor.